A 1430-amino-acid chain; its full sequence is MKDWENIFSQSHIIPPHKQRCKHAPSEKAGYQICIETLEGTPFRQGVLERSVEVSCQLRMTLFDSTYHHFFGRTWKSSTKPIKAIPGKASKILFNEPIYFYTTLIDPSIMAVIEVVALSKKQGGSKQELSCGFGIMSLFSHQLEDDSSIQSGRLKLYYGTPRSLLHPTLKDPNELNQHMTLIENTCIQYSVRPHKVLPTVAHLFPENVLVSGSETIPGIMPSCDNSGDALKKPHVQKTVICYLDQICLFLYPTLEKFEEELTMLVNSDWLPKDDGNINGGSVSIQERRLHIGVHNGWVFVQKPQIVVVVPEAEMMRGHSTTSLKKKNIAQQKLSSTVQALVLRSRIRLPEMVNHHGFALVFLLEYVFSIPNGIHSKTPSAASSTSYMHMIRWASWTPSMEQGSADVALPLQGGPHHNPSNNLVYKMPPANMSSEEVQQVESGTVHFTFCAGSENQLEKTRDFAETTSKELIQSKKNVKMSNSKLVPETTFSPLESQVGPALSISQLTTSPRYPAISHSSKTAMQYIPSQLLPSPMAYQLSHAELPYASSITHLEADMSESHPNNSNGEHLQELLFSPVHAPIVAMGTQTGSTTSLLSRASLARLHSVEFPEILDCNNEVAEVVDPSNPVNFNLQREEADYLLCNEIVLQFLAFTRIHDGSTIWPESIFFTFQFYRFHHVTTPRLQLLQLESSDIATADPLTHVLVQINKDGSIKKGSPGFQIKYSVDPGFLKPGERKWFLRFLALQTLQIDIWDGESLLLIGSAAVEMKHLLRQGRTAVQVSHDLEVITTEYEQDLMVMSGDTAKQGTAKPIGVHTIIKGRLHMRMGNVGRPPEKKLKRRETLPPSNSRIITMHDGRTGFHGGSMLSNKSMNWKQSVCQAHKLADLDSELAAMLCSRMKEVSIAYQQTNSETDTTERRKKERMMAVRQQESQENANLRKSLIMAQHEERTQHTRDLQIIEAYRERTKPECISSMLNQAITSNYTVYATLGTAEFFEFELKNPYNIQYTVTIEIDSTDLRVITDTREWKHFKELTSTVTPIEENMFHVQPNTVIPQLYLRAKETVYIPFKYQTFCVDHTPMLQGPDAESLRKHSQLSQYKSNAMSSRRIKVSFKTSDGKLIAILQVNIEPQPHVVDQTFRFYHPELTFLKKSIRLPPWYTLPGAPVGTPGGEPDLQVRCSDINIICDSKKMGPGEPQDVFIKVAGGPSPQIKRFFIALYIDPWLAAPIQIWQIYVHSLKRVDVSCITGQLTQLSLVLRGTQVVRKVRAYSSHPEELKVDPDGVFVLPPNGIQDLHIGVRPQKAGSQFIYLNLVDVDQHQLVASWLVCVSCRKPVISKAFEIALPVGGEKGCNKRISYRNPYPTKKTYSLYTNRSDLLQFKENYFEVAAGETYSIGLRFAPSQTRGQEEILIFINDREDKNEETFCVKVRYE.

The sufficient for basal bodies localization stretch occupies residues M824–E1430. The segment at N828–R857 is disordered.

This sequence belongs to the NPHP4 family.

The protein resides in the cytoplasm. The protein localises to the cytoskeleton. Its subcellular location is the cilium basal body. Its function is as follows. Involved in the organization of apical junctions. Required for building functional cilia. Involved in the organization of the subapical actin network in multiciliated epithelial cells. Seems to recruit int to basal bodies of motile cilia which subsequently interacts with actin-modifying proteins such as daam1. May down-regulate the canonical Wnt pathway and promote the Wnt-PCP pathway. Acts as a negative regulator of the hippo pathway. This chain is Nephrocystin-4 (nphp4), found in Xenopus laevis (African clawed frog).